A 107-amino-acid chain; its full sequence is Wound-induced proteinase inhibitor 1 (107 aa).

Residues 1–23 form the signal peptide; that stretch reads MESKFAHIIVFFLLATSFETLLA. Residues 24 to 36 constitute a propeptide that is removed on maturation; that stretch reads RKESDGPEVIELQ.

It belongs to the protease inhibitor I13 (potato type I serine protease inhibitor) family. Heterogeneous tetramers of similar chains.

Functionally, inhibits both chymotrypsin and trypsin. This Solanum tuberosum (Potato) protein is Wound-induced proteinase inhibitor 1.